Reading from the N-terminus, the 213-residue chain is NADH-quinone oxidoreductase subunit C (213 aa).

This sequence belongs to the complex I 30 kDa subunit family. As to quaternary structure, NDH-1 is composed of 15 different subunits. Subunits NuoB, C, D, E, F, and G constitute the peripheral sector of the complex.

The protein resides in the cell membrane. It catalyses the reaction a quinone + NADH + 5 H(+)(in) = a quinol + NAD(+) + 4 H(+)(out). Its function is as follows. NDH-1 shuttles electrons from NADH, via FMN and iron-sulfur (Fe-S) centers, to quinones in the respiratory chain. The immediate electron acceptor for the enzyme in this species is believed to be a menaquinone. Couples the redox reaction to proton translocation (for every two electrons transferred, four hydrogen ions are translocated across the cytoplasmic membrane), and thus conserves the redox energy in a proton gradient. This is NADH-quinone oxidoreductase subunit C from Deinococcus geothermalis (strain DSM 11300 / CIP 105573 / AG-3a).